The following is a 148-amino-acid chain: uncharacterized protein (148 aa).

This is an uncharacterized protein from Archaeoglobus fulgidus (strain ATCC 49558 / DSM 4304 / JCM 9628 / NBRC 100126 / VC-16).